The primary structure comprises 92 residues: MGRSLKKNPFVANHLLRKINKLNTKGEKEIIITWSRASTIIPTMIGHTIAIHNGREHLPIYITDRMVGHKLGEFSPTLTFRGYAKNDTKSRR.

The protein belongs to the universal ribosomal protein uS19 family.

It localises to the plastid. The protein resides in the chloroplast. Functionally, protein S19 forms a complex with S13 that binds strongly to the 16S ribosomal RNA. The sequence is that of Small ribosomal subunit protein uS19c from Cicer arietinum (Chickpea).